The following is a 476-amino-acid chain: Eukaryotic translation initiation factor 3 subunit L (476 aa).

The PCI domain maps to 257-452 (DAIRMFSHIL…DLDYALENDL (196 aa)).

The protein belongs to the eIF-3 subunit L family. As to quaternary structure, component of the eukaryotic translation initiation factor 3 (eIF-3) complex.

Its subcellular location is the cytoplasm. Component of the eukaryotic translation initiation factor 3 (eIF-3) complex, which is involved in protein synthesis of a specialized repertoire of mRNAs and, together with other initiation factors, stimulates binding of mRNA and methionyl-tRNAi to the 40S ribosome. The eIF-3 complex specifically targets and initiates translation of a subset of mRNAs involved in cell proliferation. In Aspergillus niger (strain ATCC MYA-4892 / CBS 513.88 / FGSC A1513), this protein is Eukaryotic translation initiation factor 3 subunit L.